A 335-amino-acid chain; its full sequence is UPF0353 protein Mjls_2492 (335 aa).

Transmembrane regions (helical) follow at residues 18–38 (WFFL…IVAL) and 67–87 (LPAI…AGPT). A VWFA domain is found at 98–294 (VVMLVIDVSQ…EQLREVYANL (197 aa)). A helical transmembrane segment spans residues 309–329 (VGWLRLGALVLALSALAALLL).

The protein belongs to the UPF0353 family.

It localises to the cell membrane. The sequence is that of UPF0353 protein Mjls_2492 from Mycobacterium sp. (strain JLS).